The following is a 169-amino-acid chain: Disulfide bond formation protein B (169 aa).

The Cytoplasmic portion of the chain corresponds to 1–14 (MNNLTLSLRRERRL). A helical membrane pass occupies residues 15 to 31 (LVLLALVCLALLAGALY). Residues 32 to 49 (LQYVKNEDPCPLCIIQRY) are Periplasmic-facing. A disulfide bond links C41 and C44. Residues 50–64 (FFVLIAVFAFIGAGM) form a helical membrane-spanning segment. Residues 65-71 (ASGAGVA) lie on the Cytoplasmic side of the membrane. The chain crosses the membrane as a helical span at residues 72 to 89 (VTEALIVLSAAAGVGTAA). At 90–144 (RHLYVQLNPGFSCGFDALQPVVDSLPPARWLPGVFKVAGLCETVYPPIFGILLPG) the chain is on the periplasmic side. A disulfide bridge connects residues C102 and C130. Residues 145–163 (WALIAFVLIAVPVAVSLLR) form a helical membrane-spanning segment. Residues 164-169 (HRGRLR) lie on the Cytoplasmic side of the membrane.

Belongs to the DsbB family.

Its subcellular location is the cell inner membrane. Required for disulfide bond formation in some periplasmic proteins. Acts by oxidizing the DsbA protein. The chain is Disulfide bond formation protein B from Burkholderia mallei (strain ATCC 23344).